Reading from the N-terminus, the 76-residue chain is Beta-defensin 121 (76 aa).

An N-terminal signal peptide occupies residues 1-15; sequence MKLLLLLLTVTLLLA. 3 cysteine pairs are disulfide-bonded: Cys-23-Cys-50, Cys-30-Cys-44, and Cys-34-Cys-51.

This sequence belongs to the beta-defensin family.

The protein localises to the secreted. Has antibacterial activity. This Pan troglodytes (Chimpanzee) protein is Beta-defensin 121 (DEFB121).